The sequence spans 476 residues: Proline--tRNA ligase 2 (476 aa).

The protein belongs to the class-II aminoacyl-tRNA synthetase family. ProS type 3 subfamily. In terms of assembly, homodimer.

Its subcellular location is the cytoplasm. It catalyses the reaction tRNA(Pro) + L-proline + ATP = L-prolyl-tRNA(Pro) + AMP + diphosphate. Functionally, catalyzes the attachment of proline to tRNA(Pro) in a two-step reaction: proline is first activated by ATP to form Pro-AMP and then transferred to the acceptor end of tRNA(Pro). This Bacillus thuringiensis subsp. konkukian (strain 97-27) protein is Proline--tRNA ligase 2.